Here is a 403-residue protein sequence, read N- to C-terminus: MASSMLSATTVPLQQGGGLSEFSGLRSSASLPMRRNATSDDFMSAVSFRTHAVGTSGGPRRAPTEAKLKVAINGFGRIGRNFLRCWHGRGDASPLDVIAINDTGGVKQASHLLKYDSTLGIFDADVKPVGDNAISVDGKVIKVVSDRNPSNLPWGELGIDLVIEGTGVFVDREGAGKHIQAGAKKVLITAPGKGDIPTYVVGVNADQYNPDEPIISNASCTTNCLAPFVKVLDQKFGIIKGTMTTTHSYTGDQRLLDASHRDLRRARAAALNIVPTSTGAAKAVSLVLPNLKGKLNGIALRVPTPNVSVVDLVVQVSKKTLAEEVNQAFRDAAANELTGILEVCDVPLVSVDFRCSDVSSTIDASLTMVMGDDMVKVISWYDNEWGYSQRVVDLADICANQWK.

Residues 1–66 (MASSMLSATT…GGPRRAPTEA (66 aa)) constitute a chloroplast transit peptide. NADP(+) is bound by residues 77-78 (RI), Asp102, and Arg147. D-glyceraldehyde 3-phosphate is bound by residues 219–221 (SCT), Thr250, Arg265, 278–279 (TG), and Arg301. Cys220 serves as the catalytic Nucleophile. Asn383 serves as a coordination point for NADP(+).

It belongs to the glyceraldehyde-3-phosphate dehydrogenase family. In terms of assembly, tetramer of either four A chains (GAPDH 2) or two A and two B chains (GAPDH 1).

Its subcellular location is the plastid. It localises to the chloroplast. It carries out the reaction D-glyceraldehyde 3-phosphate + phosphate + NADP(+) = (2R)-3-phospho-glyceroyl phosphate + NADPH + H(+). Its pathway is carbohydrate biosynthesis; Calvin cycle. This chain is Glyceraldehyde-3-phosphate dehydrogenase A, chloroplastic (GAPA), found in Zea mays (Maize).